The chain runs to 297 residues: Oxidoreductase aprR (297 aa).

It belongs to the NmrA-type oxidoreductase family. Isoflavone reductase subfamily.

Its pathway is secondary metabolite biosynthesis. Oxidoreductase; part of the gene cluster that mediates the biosynthesis of the asperipin-2a, a bicyclic peptide that possesses two macrocyclic ether rings consisting of 14- and 17-membered paracyclophans. The pathway starts with the processing of the precursor aprA by kexin proteases to produce 11 identical copies of the hexapeptide Phe-Tyr-Tyr-Thr-Gly-Tyr. Macrocyclization of asperipin-2a may accompany an alpha-hydroxylation-dehydration sequence to give an imine, which is readily hydrolyzed to yield putative ketone intermediate. The reductase aprR may be required for the final reduction to yield asperipin-2a. The sequence is that of Oxidoreductase aprR from Aspergillus flavus (strain ATCC 200026 / FGSC A1120 / IAM 13836 / NRRL 3357 / JCM 12722 / SRRC 167).